The sequence spans 352 residues: Mas-related G-protein coupled receptor member X2 (352 aa).

Topologically, residues Met1–Met45 are extracellular. 5 N-linked (GlcNAc...) asparagine glycosylation sites follow: Asn5, Asn16, Asn23, Asn28, and Asn31. A helical transmembrane segment spans residues Val46 to Phe66. Over Leu67 to Ala75 the chain is Cytoplasmic. A helical membrane pass occupies residues Phe76 to Gly96. Residues Tyr97 to Ser107 are Extracellular-facing. Residues Ile108–Leu128 traverse the membrane as a helical segment. The Cytoplasmic segment spans residues Ser129–His155. The chain crosses the membrane as a helical span at residues Thr156–Gly176. Residues Lys177–Asp195 are Extracellular-facing. Residues Leu196–Leu216 traverse the membrane as a helical segment. Residues Val217–Thr239 are Cytoplasmic-facing. A helical transmembrane segment spans residues Val240–Ile260. The Extracellular portion of the chain corresponds to Glu261–Thr275. Residues Val276–Ile296 traverse the membrane as a helical segment. The Cytoplasmic portion of the chain corresponds to Arg297–Ile347.

It belongs to the G-protein coupled receptor 1 family. Mas subfamily.

The protein localises to the cell membrane. Functionally, orphan receptor. Probably involved in the function of nociceptive neurons. May regulate nociceptor function and/or development, including the sensation or modulation of pain. In Mus musculus (Mouse), this protein is Mas-related G-protein coupled receptor member X2 (Mrgprx2).